Reading from the N-terminus, the 96-residue chain is Aspartyl/glutamyl-tRNA(Asn/Gln) amidotransferase subunit C (96 aa).

Belongs to the GatC family. Heterotrimer of A, B and C subunits.

It catalyses the reaction L-glutamyl-tRNA(Gln) + L-glutamine + ATP + H2O = L-glutaminyl-tRNA(Gln) + L-glutamate + ADP + phosphate + H(+). It carries out the reaction L-aspartyl-tRNA(Asn) + L-glutamine + ATP + H2O = L-asparaginyl-tRNA(Asn) + L-glutamate + ADP + phosphate + 2 H(+). In terms of biological role, allows the formation of correctly charged Asn-tRNA(Asn) or Gln-tRNA(Gln) through the transamidation of misacylated Asp-tRNA(Asn) or Glu-tRNA(Gln) in organisms which lack either or both of asparaginyl-tRNA or glutaminyl-tRNA synthetases. The reaction takes place in the presence of glutamine and ATP through an activated phospho-Asp-tRNA(Asn) or phospho-Glu-tRNA(Gln). The sequence is that of Aspartyl/glutamyl-tRNA(Asn/Gln) amidotransferase subunit C from Bacillus cytotoxicus (strain DSM 22905 / CIP 110041 / 391-98 / NVH 391-98).